We begin with the raw amino-acid sequence, 129 residues long: uncharacterized protein (129 aa).

The span at 91–114 (ASEKVGEMKEAASEKASEMKEAVS) shows a compositional bias: basic and acidic residues. Residues 91–129 (ASEKVGEMKEAASEKASEMKEAVSEKATQAVDAVKEATK) are disordered.

This sequence belongs to the LEA type 1 family.

This is an uncharacterized protein from Haemophilus influenzae (strain ATCC 51907 / DSM 11121 / KW20 / Rd).